A 563-amino-acid polypeptide reads, in one-letter code: MSTQIFASSSQNEKIHKILRPTKKLQPSVWGERFLHYNISEQELRYKQQQVEELKAVVKKEIFGESAYDVSHQLKLINVVERLGLSYHFESEIENELESIYNKSVDQNYILKDENLHDASLRFRLLRQHGFRVSSADIFEKFKDEDGNFKECLVSDTIGLLSLYEASHLSCVGENILDEALDFTTTHLTEFLANKKEHDDPLSKEISQALERPLRKSLERLAARHFISIYANETSHNKVLLQLAKLDFNLLQSIHKKELSEISRWWKESDFVHKFPFARDRIVELYLWILAVYYEPQYYLARNILTKTIALASIADDIYDEYGTIEELELLTEAVERWDINFIDKLNPEYLQTFYKELLNSYEEFEQALSKEETYRVHYAKERFKELLRSSLEVAWWLKEGRVPSFDEYLKISLINCGYHMLIVSSLIGMKGSIVTKEVFEWLSIDRKIVRASVTICRLMDDIAEYKFEQEKNEEPSAVECYMKQYGVSEEEAYDELNKRVVNAWKEINEELLKPTGVASPILVRALNFSKFMDLFYKNGDGYTQVGKVTKHSVAALLIHPIP.

Positions 316, 320, 461, and 469 each coordinate Mg(2+). Positions 316 to 320 match the DDXXD motif motif; sequence DDIYD.

Belongs to the terpene synthase family. Tpsa subfamily. Mg(2+) serves as cofactor. As to expression, expressed in young leaves. Detected in trichomes and cones.

It catalyses the reaction (2E,6E)-farnesyl diphosphate = (+)-(R)-germacrene A + diphosphate. It functions in the pathway secondary metabolite biosynthesis; terpenoid biosynthesis. Functionally, sesquiterpene synthase that catalyzes the formation of germacrene A. Can use farnesyl diphosphate as substrate, but not geranyl diphosphate or geranylgeranyl diphosphate. Beta-elemene, the initially measured product in the assay, is derived nonenzymatically from germacrene A. In Humulus lupulus (European hop), this protein is Germacrene-A synthase.